The chain runs to 336 residues: Holliday junction branch migration complex subunit RuvB (336 aa).

Residues 4–184 (ADRLISAGAT…FGIVQRLEFY (181 aa)) form a large ATPase domain (RuvB-L) region. Residues Ile-23, Arg-24, Gly-65, Lys-68, Thr-69, Thr-70, 131–133 (EDY), Arg-174, Tyr-184, and Arg-221 contribute to the ATP site. Thr-69 is a Mg(2+) binding site. The small ATPAse domain (RuvB-S) stretch occupies residues 185–255 (QVPDLQHIVG…IAAQALDMLN (71 aa)). The interval 258 to 336 (AEGFDYMDRK…HFGITPPEMP (79 aa)) is head domain (RuvB-H). Residues Arg-294, Arg-313, and Arg-318 each coordinate DNA.

This sequence belongs to the RuvB family. Homohexamer. Forms an RuvA(8)-RuvB(12)-Holliday junction (HJ) complex. HJ DNA is sandwiched between 2 RuvA tetramers; dsDNA enters through RuvA and exits via RuvB. An RuvB hexamer assembles on each DNA strand where it exits the tetramer. Each RuvB hexamer is contacted by two RuvA subunits (via domain III) on 2 adjacent RuvB subunits; this complex drives branch migration. In the full resolvosome a probable DNA-RuvA(4)-RuvB(12)-RuvC(2) complex forms which resolves the HJ.

It localises to the cytoplasm. It carries out the reaction ATP + H2O = ADP + phosphate + H(+). Its function is as follows. The RuvA-RuvB-RuvC complex processes Holliday junction (HJ) DNA during genetic recombination and DNA repair, while the RuvA-RuvB complex plays an important role in the rescue of blocked DNA replication forks via replication fork reversal (RFR). RuvA specifically binds to HJ cruciform DNA, conferring on it an open structure. The RuvB hexamer acts as an ATP-dependent pump, pulling dsDNA into and through the RuvAB complex. RuvB forms 2 homohexamers on either side of HJ DNA bound by 1 or 2 RuvA tetramers; 4 subunits per hexamer contact DNA at a time. Coordinated motions by a converter formed by DNA-disengaged RuvB subunits stimulates ATP hydrolysis and nucleotide exchange. Immobilization of the converter enables RuvB to convert the ATP-contained energy into a lever motion, pulling 2 nucleotides of DNA out of the RuvA tetramer per ATP hydrolyzed, thus driving DNA branch migration. The RuvB motors rotate together with the DNA substrate, which together with the progressing nucleotide cycle form the mechanistic basis for DNA recombination by continuous HJ branch migration. Branch migration allows RuvC to scan DNA until it finds its consensus sequence, where it cleaves and resolves cruciform DNA. The sequence is that of Holliday junction branch migration complex subunit RuvB from Salmonella agona (strain SL483).